A 603-amino-acid polypeptide reads, in one-letter code: Myotubularin (603 aa).

Over residues 1 to 13 (MASAPTSKYNSHS) the composition is skewed to polar residues. A disordered region spans residues 1 to 32 (MASAPTSKYNSHSLENESIKRTSRDGVNRDVG). Residues Ser-13 and Ser-18 each carry the phosphoserine modification. The span at 14 to 32 (LENESIKRTSRDGVNRDVG) shows a compositional bias: basic and acidic residues. The GRAM domain maps to 29 to 97 (RDVGETLPRL…GVISRIEKMG (69 aa)). The region spanning 163 to 538 (GWTVYNPVEE…RHLELWVNYY (376 aa)) is the Myotubularin phosphatase domain. Residues Asn-288, Asn-313, and Ile-314 each contribute to the a 1,2-diacyl-sn-glycero-3-phospho-(1D-myo-inositol-3,5-bisphosphate) site. Residues Asn-288, Asn-313, and Ile-314 each contribute to the a 1,2-diacyl-sn-glycero-3-phospho-(1D-myo-inositol-3-phosphate) site. Cys-375 acts as the Phosphocysteine intermediate in catalysis. 8 residues coordinate a 1,2-diacyl-sn-glycero-3-phospho-(1D-myo-inositol-3,5-bisphosphate): Ser-376, Asp-377, Gly-378, Trp-379, Asp-380, Arg-381, Lys-417, and Arg-421. Residues Ser-376, Asp-377, Gly-378, Trp-379, Asp-380, and Arg-381 each coordinate a 1,2-diacyl-sn-glycero-3-phospho-(1D-myo-inositol-3-phosphate). An a 1,2-diacyl-sn-glycero-3-phospho-(1D-myo-inositol-3-phosphate)-binding site is contributed by Arg-421. Thr-495 carries the post-translational modification Phosphothreonine. Residues 580–603 (AKLSDPSASPSSPSQMMPHVQTHF) are disordered. A compositionally biased stretch (low complexity) spans 583–593 (SDPSASPSSPS). Ser-588 carries the phosphoserine modification.

This sequence belongs to the protein-tyrosine phosphatase family. Non-receptor class myotubularin subfamily. As to quaternary structure, heterodimer with MTMR12. Interacts with KMT2A/MLL1 (via SET domain). Interacts with DES in skeletal muscle but not in cardiac muscle. Interacts with SPEG.

It is found in the cytoplasm. The protein localises to the cell membrane. The protein resides in the cell projection. Its subcellular location is the filopodium. It localises to the ruffle. It is found in the late endosome. The protein localises to the myofibril. The protein resides in the sarcomere. The catalysed reaction is a 1,2-diacyl-sn-glycero-3-phospho-(1D-myo-inositol-3-phosphate) + H2O = a 1,2-diacyl-sn-glycero-3-phospho-(1D-myo-inositol) + phosphate. It carries out the reaction a 1,2-diacyl-sn-glycero-3-phospho-(1D-myo-inositol-3,5-bisphosphate) + H2O = a 1,2-diacyl-sn-glycero-3-phospho-(1D-myo-inositol-5-phosphate) + phosphate. The enzyme catalyses 1,2-dioctanoyl-sn-glycero-3-phospho-(1-D-myo-inositol-3-phosphate) + H2O = 1,2-dioctanoyl-sn-glycero-3-phospho-(1D-myo-inositol) + phosphate. It catalyses the reaction 1,2-dioctanoyl-sn-glycero-3-phospho-(1D-myo-inositol-3,5-bisphosphate) + H2O = 1,2-dioctanoyl-sn-glycero-3-phospho-(1D-myo-inositol-5-phosphate) + phosphate. The catalysed reaction is 1,2-dihexadecanoyl-sn-glycero-3-phospho-(1D-myo-inositol-3,5-phosphate) + H2O = 1,2-dihexadecanoyl-sn-glycero-3-phospho-(1D-myo-inositol-5-phosphate) + phosphate. Allosterically activated by phosphatidylinositol 5-phosphate (PI5P). Its function is as follows. Lipid phosphatase which dephosphorylates phosphatidylinositol 3-monophosphate (PI3P) and phosphatidylinositol 3,5-bisphosphate (PI(3,5)P2). Has also been shown to dephosphorylate phosphotyrosine- and phosphoserine-containing peptides. Negatively regulates EGFR degradation through regulation of EGFR trafficking from the late endosome to the lysosome. Plays a role in vacuolar formation and morphology. Regulates desmin intermediate filament assembly and architecture. Plays a role in mitochondrial morphology and positioning. Required for skeletal muscle maintenance but not for myogenesis. In skeletal muscles, stabilizes MTMR12 protein levels. The chain is Myotubularin from Bos taurus (Bovine).